A 143-amino-acid chain; its full sequence is Putative mediator of RNA polymerase II transcription subunit 11 (143 aa).

Residues 97 to 143 (ILSHLEDLNNIVENNQEKQEKEKQEKEKLEKEKLEKEKQQSNEMNID) are a coiled coil. The disordered stretch occupies residues 109–143 (ENNQEKQEKEKQEKEKLEKEKLEKEKQQSNEMNID). The span at 111 to 136 (NQEKQEKEKQEKEKLEKEKLEKEKQQ) shows a compositional bias: basic and acidic residues.

Belongs to the Mediator complex subunit 11 family. Component of the Mediator complex.

The protein resides in the nucleus. Its function is as follows. Component of the Mediator complex, a coactivator involved in the regulated transcription of nearly all RNA polymerase II-dependent genes. Mediator functions as a bridge to convey information from gene-specific regulatory proteins to the basal RNA polymerase II transcription machinery. Mediator is recruited to promoters by direct interactions with regulatory proteins and serves as a scaffold for the assembly of a functional pre-initiation complex with RNA polymerase II and the general transcription factors. This chain is Putative mediator of RNA polymerase II transcription subunit 11 (med11), found in Dictyostelium discoideum (Social amoeba).